A 343-amino-acid polypeptide reads, in one-letter code: S-adenosylmethionine:tRNA ribosyltransferase-isomerase (343 aa).

This sequence belongs to the QueA family. As to quaternary structure, monomer.

The protein localises to the cytoplasm. It catalyses the reaction 7-aminomethyl-7-carbaguanosine(34) in tRNA + S-adenosyl-L-methionine = epoxyqueuosine(34) in tRNA + adenine + L-methionine + 2 H(+). It functions in the pathway tRNA modification; tRNA-queuosine biosynthesis. In terms of biological role, transfers and isomerizes the ribose moiety from AdoMet to the 7-aminomethyl group of 7-deazaguanine (preQ1-tRNA) to give epoxyqueuosine (oQ-tRNA). The chain is S-adenosylmethionine:tRNA ribosyltransferase-isomerase from Coxiella burnetii (strain CbuG_Q212) (Coxiella burnetii (strain Q212)).